The sequence spans 369 residues: Ferredoxin--NADP reductase, chloroplastic (369 aa).

A chloroplast-targeting transit peptide spans 1–55 (MTTAVTAAVSFPSTKTTSLSARSSSVISPDKISYKKVPLYYRNVSATGKMGPIRA). The FAD-binding FR-type domain occupies 90–212 (KTPYVGRCLL…TGPVGKEMLM (123 aa)). FAD-binding positions include 148 to 151 (RLYS), 169 to 171 (CVK), Tyr175, 186 to 188 (VCS), and Thr227. 2 residues coordinate NADP(+): Ser151 and Lys171. Residues Thr227, 259–260 (VP), 289–290 (SR), 299–301 (KMY), 328–329 (GL), and Glu367 each bind NADP(+).

Belongs to the ferredoxin--NADP reductase type 1 family. Requires FAD as cofactor.

The protein resides in the plastid. Its subcellular location is the chloroplast stroma. It localises to the chloroplast thylakoid membrane. It carries out the reaction 2 reduced [2Fe-2S]-[ferredoxin] + NADP(+) + H(+) = 2 oxidized [2Fe-2S]-[ferredoxin] + NADPH. The protein operates within energy metabolism; photosynthesis. Its function is as follows. May play a key role in regulating the relative amounts of cyclic and non-cyclic electron flow to meet the demands of the plant for ATP and reducing power. The chain is Ferredoxin--NADP reductase, chloroplastic (PETH) from Spinacia oleracea (Spinach).